Reading from the N-terminus, the 154-residue chain is 6,7-dimethyl-8-ribityllumazine synthase (154 aa).

Residues Phe22, Ser56–Glu58, and Val81–Ile83 contribute to the 5-amino-6-(D-ribitylamino)uracil site. Glu86–Thr87 lines the (2S)-2-hydroxy-3-oxobutyl phosphate pocket. His89 serves as the catalytic Proton donor. Phe114 lines the 5-amino-6-(D-ribitylamino)uracil pocket. Arg128 is a (2S)-2-hydroxy-3-oxobutyl phosphate binding site.

Belongs to the DMRL synthase family.

It catalyses the reaction (2S)-2-hydroxy-3-oxobutyl phosphate + 5-amino-6-(D-ribitylamino)uracil = 6,7-dimethyl-8-(1-D-ribityl)lumazine + phosphate + 2 H2O + H(+). It functions in the pathway cofactor biosynthesis; riboflavin biosynthesis; riboflavin from 2-hydroxy-3-oxobutyl phosphate and 5-amino-6-(D-ribitylamino)uracil: step 1/2. Its function is as follows. Catalyzes the formation of 6,7-dimethyl-8-ribityllumazine by condensation of 5-amino-6-(D-ribitylamino)uracil with 3,4-dihydroxy-2-butanone 4-phosphate. This is the penultimate step in the biosynthesis of riboflavin. The chain is 6,7-dimethyl-8-ribityllumazine synthase from Chlamydia caviae (strain ATCC VR-813 / DSM 19441 / 03DC25 / GPIC) (Chlamydophila caviae).